Consider the following 147-residue polypeptide: uncharacterized protein (147 aa).

This is an uncharacterized protein from Homo sapiens (Human).